Reading from the N-terminus, the 201-residue chain is Achaete-scute complex protein T5 (201 aa).

The span at 1-10 shows a compositional bias: polar residues; it reads MALGSENHSV. Residues 1–32 are disordered; that stretch reads MALGSENHSVFNDDEESSSAFNGPSVIRRNAR. In terms of domain architecture, bHLH spans 24–90; sequence PSVIRRNARE…KMAVEYIRRL (67 aa).

As to quaternary structure, efficient DNA binding requires dimerization with another bHLH protein. L(1)SC, SC and AC strongly label the presumptive stomatogastric nervous system, while ASE is more prominent in the presumptive procephalic lobe.

Functionally, AS-C proteins are involved in the determination of the neuronal precursors in the peripheral nervous system and the central nervous system. This chain is Achaete-scute complex protein T5 (ac), found in Drosophila melanogaster (Fruit fly).